A 231-amino-acid chain; its full sequence is Nucleoside diphosphate kinase II, chloroplastic (231 aa).

A chloroplast-targeting transit peptide spans Met1–Arg62. ATP-binding residues include Lys91, Phe139, Arg167, Thr173, Arg184, and Asn194. Residue His197 is the Pros-phosphohistidine intermediate of the active site.

This sequence belongs to the NDK family. As to quaternary structure, interacts with PHYA, MPK3 and MPK6. Requires Mg(2+) as cofactor. In terms of processing, autophosphorylated.

The protein localises to the plastid. It is found in the chloroplast. The catalysed reaction is a 2'-deoxyribonucleoside 5'-diphosphate + ATP = a 2'-deoxyribonucleoside 5'-triphosphate + ADP. The enzyme catalyses a ribonucleoside 5'-diphosphate + ATP = a ribonucleoside 5'-triphosphate + ADP. In terms of biological role, major role in the synthesis of nucleoside triphosphates other than ATP. The ATP gamma phosphate is transferred to the NDP beta phosphate via a ping-pong mechanism, using a phosphorylated active-site intermediate. May activate MPK3 and MPK6. May be involved in the regulation of cellular redox state and hydrogen peroxide-mediated MAP kinase signaling. This is Nucleoside diphosphate kinase II, chloroplastic (NDPK2) from Arabidopsis thaliana (Mouse-ear cress).